Here is a 78-residue protein sequence, read N- to C-terminus: MGKKCQLTGKKANNAFAVSHSHRRTHKLQEANLQWKRVWWPQEKRWVKLRLSTKAIKTLEKKGLAAFAREAGINLNQV.

It belongs to the bacterial ribosomal protein bL28 family.

The polypeptide is Large ribosomal subunit protein bL28 (Acaryochloris marina (strain MBIC 11017)).